Consider the following 761-residue polypeptide: Cytoplasmic export protein 1 (761 aa).

HEAT repeat units follow at residues 385 to 423 (IYPH…LNNE) and 498 to 534 (NTIA…LEKL). 2 disordered regions span residues 660–692 (DDGW…IAPS) and 714–761 (STVT…DTNW). 2 stretches are compositionally biased toward polar residues: residues 680–692 (PQNS…IAPS) and 714–737 (STVT…SIRG). The segment covering 747–761 (GWDDDGDSDSWDTNW) has biased composition (acidic residues). Ser-754 carries the phosphoserine modification.

Associates with the nuclear pore complex (NPC). Interacts with GSP1, LOS1, MSN5, NUP116 and TEF2.

Its subcellular location is the cytoplasm. Component of the nuclear tRNA export machinery that my collect tRNA from the nuclear tRNA export receptors of the aminoacylation-dependent export and may deliver aminoacylated tRNAs to the translation machinery pathway at the nuclear pore complex. The chain is Cytoplasmic export protein 1 (CEX1) from Saccharomyces cerevisiae (strain ATCC 204508 / S288c) (Baker's yeast).